Here is a 391-residue protein sequence, read N- to C-terminus: Trehalose-phosphate phosphatase (391 aa).

The active-site Nucleophile is Asp-147. Asp-147, Asp-149, and Asp-330 together coordinate Mg(2+). 147–149 (DFD) is a binding site for substrate.

This sequence belongs to the trehalose phosphatase family. It depends on Mg(2+) as a cofactor.

It catalyses the reaction alpha,alpha-trehalose 6-phosphate + H2O = alpha,alpha-trehalose + phosphate. The protein operates within glycan biosynthesis; trehalose biosynthesis. Removes the phosphate from trehalose 6-phosphate to produce free trehalose. This chain is Trehalose-phosphate phosphatase (otsB), found in Mycobacterium avium (strain 104).